The sequence spans 242 residues: Ubiquinone/menaquinone biosynthesis C-methyltransferase UbiE (242 aa).

S-adenosyl-L-methionine contacts are provided by residues T69, D87, and 114–115; that span reads NA.

Belongs to the class I-like SAM-binding methyltransferase superfamily. MenG/UbiE family.

It catalyses the reaction a 2-demethylmenaquinol + S-adenosyl-L-methionine = a menaquinol + S-adenosyl-L-homocysteine + H(+). It carries out the reaction a 2-methoxy-6-(all-trans-polyprenyl)benzene-1,4-diol + S-adenosyl-L-methionine = a 5-methoxy-2-methyl-3-(all-trans-polyprenyl)benzene-1,4-diol + S-adenosyl-L-homocysteine + H(+). It functions in the pathway quinol/quinone metabolism; menaquinone biosynthesis; menaquinol from 1,4-dihydroxy-2-naphthoate: step 2/2. Its pathway is cofactor biosynthesis; ubiquinone biosynthesis. Functionally, methyltransferase required for the conversion of demethylmenaquinol (DMKH2) to menaquinol (MKH2) and the conversion of 2-polyprenyl-6-methoxy-1,4-benzoquinol (DDMQH2) to 2-polyprenyl-3-methyl-6-methoxy-1,4-benzoquinol (DMQH2). The chain is Ubiquinone/menaquinone biosynthesis C-methyltransferase UbiE from Zymomonas mobilis subsp. mobilis (strain ATCC 31821 / ZM4 / CP4).